We begin with the raw amino-acid sequence, 428 residues long: MSYYLSSENHLDPGPIYMRENGQLHMVNLALDGVRSSLQKPRPFRLFPKGFSVELCMNREDDTARKEKTDHFIFTYTREGNLRYSAKSLFSLVLGFISDNVDHIDSLIGFPEQIAEKLFSAAEARQKFTEPGAGLRALQKFTEAYGSLVLCSLCLRNRYLVISEKLEEIKSFRELTCLDLSCCKLGDEHELLEHLTNEALSSVTQLHLKDNCLSDAGVRKMTAPVRVMKRGLENLTLLDLSCNPEITDAGIGYLFSFRKLNCLDISGTGLKDIKTVKHKLQTHIGLVHSKVPLKEFDHSNCKTEGWADQIVLQWERVTAEAVKPRETSEPRAAAQRFYGKRSRAEAPLKCPLADTHMNSSEKLQFYKEKAPDCHGPVLKHEAISSQESKKSKKRPFEESETEQNNSSQPSKQKYVCLAVEDWDLLNSY.

LRR repeat units follow at residues 149–170, 174–195, 202–222, 234–255, and 259–280; these read VLCS…EEIK, ELTC…LEHL, SVTQ…RKMT, NLTL…GYLF, and KLNC…KHKL. A disordered region spans residues 379–412; sequence KHEAISSQESKKSKKRPFEESETEQNNSSQPSKQ. Phosphoserine occurs at positions 406 and 407.

The protein belongs to the LRRC42 family.

In Homo sapiens (Human), this protein is Leucine-rich repeat-containing protein 42 (LRRC42).